The sequence spans 298 residues: Porphobilinogen deaminase (298 aa).

Cysteine 242 bears the S-(dipyrrolylmethanemethyl)cysteine mark.

The protein belongs to the HMBS family. As to quaternary structure, monomer. It depends on dipyrromethane as a cofactor.

It carries out the reaction 4 porphobilinogen + H2O = hydroxymethylbilane + 4 NH4(+). The protein operates within porphyrin-containing compound metabolism; protoporphyrin-IX biosynthesis; coproporphyrinogen-III from 5-aminolevulinate: step 2/4. Functionally, tetrapolymerization of the monopyrrole PBG into the hydroxymethylbilane pre-uroporphyrinogen in several discrete steps. The polypeptide is Porphobilinogen deaminase (Fusobacterium nucleatum subsp. nucleatum (strain ATCC 25586 / DSM 15643 / BCRC 10681 / CIP 101130 / JCM 8532 / KCTC 2640 / LMG 13131 / VPI 4355)).